The primary structure comprises 430 residues: Trigger factor (430 aa).

Residues 163–248 form the PPIase FKBP-type domain; that stretch reads GNIAIIDFKG…IKDIKVKELP (86 aa).

This sequence belongs to the FKBP-type PPIase family. Tig subfamily.

Its subcellular location is the cytoplasm. The enzyme catalyses [protein]-peptidylproline (omega=180) = [protein]-peptidylproline (omega=0). Its function is as follows. Involved in protein export. Acts as a chaperone by maintaining the newly synthesized protein in an open conformation. Functions as a peptidyl-prolyl cis-trans isomerase. This Clostridium botulinum (strain Loch Maree / Type A3) protein is Trigger factor.